The sequence spans 347 residues: Endophilin-A3 (347 aa).

A membrane-binding amphipathic helix region spans residues 1–21; the sequence is MSVAGLKKQFHKASQLFSEKI. The BAR domain maps to 18–249; it reads SEKISGAEGT…LELRIALASQ (232 aa). The interval 60-87 is required for dimerization upon membrane association; the sequence is PNPAYRAKLGMLNTMSKLRGQVKATGYP. Residues 180–201 adopt a coiled-coil conformation; sequence EEEIRQAVEKFEESKELAERSM. An interaction with ARC region spans residues 218-254; that stretch reads FVEAALDYHRQSTEILQELQNKLELRIALASQVPRRD. A disordered region spans residues 255 to 284; it reads YMPKPVNTSSTNANGVEPSSSSKLTGTDIP. Residues 260 to 284 show a composition bias toward polar residues; it reads VNTSSTNANGVEPSSSSKLTGTDIP. The SH3 domain maps to 285–344; the sequence is SDQPCCRGLYDFEPENEGELGFKEGDIITLTNQIDENWYEGMLRGESGFFPINYVEVIVP.

The protein belongs to the endophilin family. Interacts with SGIP1 and DYDC1. Interacts with FASLG. Interacts with ATXN2. Interacts with BIN2. Interacts with ARC, DNM1 and SYNJ1. Expressed at high level in testis and at lower level in brain and liver.

Its subcellular location is the cytoplasm. The protein localises to the early endosome membrane. Its function is as follows. Implicated in endocytosis. May recruit other proteins to membranes with high curvature. This Rattus norvegicus (Rat) protein is Endophilin-A3 (Sh3gl3).